The primary structure comprises 116 residues: Large ribosomal subunit protein bL19 (116 aa).

This sequence belongs to the bacterial ribosomal protein bL19 family.

Functionally, this protein is located at the 30S-50S ribosomal subunit interface and may play a role in the structure and function of the aminoacyl-tRNA binding site. This is Large ribosomal subunit protein bL19 from Pseudomonas fluorescens (strain ATCC BAA-477 / NRRL B-23932 / Pf-5).